A 440-amino-acid chain; its full sequence is D-serine dehydratase (440 aa).

Lys116 bears the N6-(pyridoxal phosphate)lysine mark.

Belongs to the serine/threonine dehydratase family. DsdA subfamily. Monomer. Pyridoxal 5'-phosphate serves as cofactor.

The enzyme catalyses D-serine = pyruvate + NH4(+). The polypeptide is D-serine dehydratase (Salmonella typhimurium (strain LT2 / SGSC1412 / ATCC 700720)).